The primary structure comprises 660 residues: tRNA 5-methylaminomethyl-2-thiouridine biosynthesis bifunctional protein MnmC (660 aa).

The tract at residues 1 to 241 (MNDHPAQDAF…KREILRGHLQ (241 aa)) is tRNA (mnm(5)s(2)U34)-methyltransferase. An FAD-dependent cmnm(5)s(2)U34 oxidoreductase region spans residues 268 to 660 (IGAGLAGCAT…FLLRKLIRGT (393 aa)).

The protein in the N-terminal section; belongs to the methyltransferase superfamily. tRNA (mnm(5)s(2)U34)-methyltransferase family. In the C-terminal section; belongs to the DAO family. The cofactor is FAD.

The protein localises to the cytoplasm. It carries out the reaction 5-aminomethyl-2-thiouridine(34) in tRNA + S-adenosyl-L-methionine = 5-methylaminomethyl-2-thiouridine(34) in tRNA + S-adenosyl-L-homocysteine + H(+). Catalyzes the last two steps in the biosynthesis of 5-methylaminomethyl-2-thiouridine (mnm(5)s(2)U) at the wobble position (U34) in tRNA. Catalyzes the FAD-dependent demodification of cmnm(5)s(2)U34 to nm(5)s(2)U34, followed by the transfer of a methyl group from S-adenosyl-L-methionine to nm(5)s(2)U34, to form mnm(5)s(2)U34. This is tRNA 5-methylaminomethyl-2-thiouridine biosynthesis bifunctional protein MnmC from Stutzerimonas stutzeri (strain A1501) (Pseudomonas stutzeri).